A 205-amino-acid chain; its full sequence is Small ribosomal subunit protein uS4 (205 aa).

Residues 20-46 (WGRSKSPVNRREYGPGQHGQRRKGKLS) are disordered. Residues 94 to 157 (RRLDAVVYRA…RQLTLVLEAS (64 aa)) form the S4 RNA-binding domain.

It belongs to the universal ribosomal protein uS4 family. In terms of assembly, part of the 30S ribosomal subunit. Contacts protein S5. The interaction surface between S4 and S5 is involved in control of translational fidelity.

Functionally, one of the primary rRNA binding proteins, it binds directly to 16S rRNA where it nucleates assembly of the body of the 30S subunit. With S5 and S12 plays an important role in translational accuracy. The protein is Small ribosomal subunit protein uS4 of Beijerinckia indica subsp. indica (strain ATCC 9039 / DSM 1715 / NCIMB 8712).